Here is a 265-residue protein sequence, read N- to C-terminus: Tryptophan synthase alpha chain (265 aa).

Catalysis depends on proton acceptor residues Glu-49 and Asp-60.

The protein belongs to the TrpA family. As to quaternary structure, tetramer of two alpha and two beta chains.

The catalysed reaction is (1S,2R)-1-C-(indol-3-yl)glycerol 3-phosphate + L-serine = D-glyceraldehyde 3-phosphate + L-tryptophan + H2O. It participates in amino-acid biosynthesis; L-tryptophan biosynthesis; L-tryptophan from chorismate: step 5/5. In terms of biological role, the alpha subunit is responsible for the aldol cleavage of indoleglycerol phosphate to indole and glyceraldehyde 3-phosphate. This is Tryptophan synthase alpha chain from Cupriavidus taiwanensis (strain DSM 17343 / BCRC 17206 / CCUG 44338 / CIP 107171 / LMG 19424 / R1) (Ralstonia taiwanensis (strain LMG 19424)).